Here is a 209-residue protein sequence, read N- to C-terminus: Methylthioribulose-1-phosphate dehydratase (209 aa).

Positions 99 and 101 each coordinate Zn(2+).

Belongs to the aldolase class II family. MtnB subfamily. It depends on Zn(2+) as a cofactor.

It catalyses the reaction 5-(methylsulfanyl)-D-ribulose 1-phosphate = 5-methylsulfanyl-2,3-dioxopentyl phosphate + H2O. The protein operates within amino-acid biosynthesis; L-methionine biosynthesis via salvage pathway; L-methionine from S-methyl-5-thio-alpha-D-ribose 1-phosphate: step 2/6. Its function is as follows. Catalyzes the dehydration of methylthioribulose-1-phosphate (MTRu-1-P) into 2,3-diketo-5-methylthiopentyl-1-phosphate (DK-MTP-1-P). The protein is Methylthioribulose-1-phosphate dehydratase of Leptospira biflexa serovar Patoc (strain Patoc 1 / Ames).